We begin with the raw amino-acid sequence, 449 residues long: Signal recognition particle protein (449 aa).

GTP-binding positions include 109–116, 191–195, and 249–252; these read GLQGGGKT, DTAGR, and SRID.

The protein belongs to the GTP-binding SRP family. SRP54 subfamily. In terms of assembly, part of the signal recognition particle protein translocation system, which is composed of SRP and FtsY. SRP is a ribonucleoprotein composed of Ffh and a 4.5S RNA molecule.

The protein localises to the cytoplasm. It carries out the reaction GTP + H2O = GDP + phosphate + H(+). Involved in targeting and insertion of nascent membrane proteins into the cytoplasmic membrane. Binds to the hydrophobic signal sequence of the ribosome-nascent chain (RNC) as it emerges from the ribosomes. The SRP-RNC complex is then targeted to the cytoplasmic membrane where it interacts with the SRP receptor FtsY. Interaction with FtsY leads to the transfer of the RNC complex to the Sec translocase for insertion into the membrane, the hydrolysis of GTP by both Ffh and FtsY, and the dissociation of the SRP-FtsY complex into the individual components. This chain is Signal recognition particle protein, found in Rickettsia typhi (strain ATCC VR-144 / Wilmington).